A 699-amino-acid polypeptide reads, in one-letter code: Polyribonucleotide nucleotidyltransferase (699 aa).

The Mg(2+) site is built by Asp485 and Asp491. The region spanning 552 to 611 (PRITTIKINPEKIRDVIGKGGAVIRALTEETGTTIELEDDGTVKIASSNGEATKEAIRRI) is the KH domain. The region spanning 621-689 (GRIYNGKVIR…RQGRVRLSIK (69 aa)) is the S1 motif domain.

The protein belongs to the polyribonucleotide nucleotidyltransferase family. Component of the RNA degradosome, which is a multiprotein complex involved in RNA processing and mRNA degradation. It depends on Mg(2+) as a cofactor.

The protein resides in the cytoplasm. It carries out the reaction RNA(n+1) + phosphate = RNA(n) + a ribonucleoside 5'-diphosphate. In terms of biological role, involved in mRNA degradation. Catalyzes the phosphorolysis of single-stranded polyribonucleotides processively in the 3'- to 5'-direction. The sequence is that of Polyribonucleotide nucleotidyltransferase from Shewanella sp. (strain MR-4).